The following is a 166-amino-acid chain: Myeloid-derived growth factor (166 aa).

The signal sequence occupies residues 1–24 (MAAPSGGFWTAVVLAAAALKLAAA).

The protein belongs to the MYDGF family. In terms of tissue distribution, expressed in prostate, spleen and lung, and weakly expressed in the left ventricle (LF) and liver. Expressed predominantly in inflammatory cells, such as monocytes and macrophages, and weakly expressed in neutrophils, T-cells, B-cells, endothelial cells and cardiac myocytes, after myocardial infarction (MI) (at protein level).

It is found in the secreted. The protein localises to the endoplasmic reticulum-Golgi intermediate compartment. The protein resides in the endoplasmic reticulum. Its subcellular location is the golgi apparatus. Bone marrow-derived monocyte and paracrine-acting protein that promotes cardiac myocyte survival and adaptive angiogenesis for cardiac protection and/or repair after myocardial infarction (MI). Stimulates endothelial cell proliferation through a MAPK1/3-, STAT3- and CCND1-mediated signaling pathway. Inhibits cardiac myocyte apoptosis in a PI3K/AKT-dependent signaling pathway. The polypeptide is Myeloid-derived growth factor (Mus musculus (Mouse)).